Here is a 169-residue protein sequence, read N- to C-terminus: MEVNFKQDKEIQEQIEKNIILTKLDDTLNYFRAHSFWPLTFGLACCAIEMMAAGGARYDIARFGYEVFRASPRQADLMIVAGTITEKMAPIVKKIYDQMPEPKWVIAMGSCATSGGPFVDSYNVVPGADTFLPVDVYIPGCPPRPEALIHGLLTLKEKIIHPKEVGRSE.

[4Fe-4S] cluster-binding residues include Cys-45, Cys-46, Cys-111, and Cys-141.

This sequence belongs to the complex I 20 kDa subunit family. As to quaternary structure, NDH-1 is composed of 14 different subunits. Subunits NuoB, C, D, E, F, and G constitute the peripheral sector of the complex. It depends on [4Fe-4S] cluster as a cofactor.

It is found in the cell membrane. It carries out the reaction a quinone + NADH + 5 H(+)(in) = a quinol + NAD(+) + 4 H(+)(out). Functionally, NDH-1 shuttles electrons from NADH, via FMN and iron-sulfur (Fe-S) centers, to quinones in the respiratory chain. The immediate electron acceptor for the enzyme in this species is believed to be a menaquinone. Couples the redox reaction to proton translocation (for every two electrons transferred, four hydrogen ions are translocated across the cytoplasmic membrane), and thus conserves the redox energy in a proton gradient. The chain is NADH-quinone oxidoreductase subunit B from Clostridium beijerinckii (strain ATCC 51743 / NCIMB 8052) (Clostridium acetobutylicum).